Reading from the N-terminus, the 856-residue chain is Beta-galactosidase 3 (856 aa).

Positions 1–31 (MREMGTGDSASRLILWFCLGFLILGVGFVQC) are cleaved as a signal peptide. The active-site Proton donor is E189. E258 serves as the catalytic Nucleophile. N468 carries N-linked (GlcNAc...) asparagine glycosylation. Residues 760-846 (TFHRPKVHLK…KRLTVEAVCA (87 aa)) form the SUEL-type lectin domain.

This sequence belongs to the glycosyl hydrolase 35 family. As to expression, ubiquitous.

Its subcellular location is the secreted. It localises to the extracellular space. The protein localises to the apoplast. The catalysed reaction is Hydrolysis of terminal non-reducing beta-D-galactose residues in beta-D-galactosides.. This is Beta-galactosidase 3 (BGAL3) from Arabidopsis thaliana (Mouse-ear cress).